We begin with the raw amino-acid sequence, 465 residues long: UDP-N-acetylmuramate--L-alanine ligase (465 aa).

Position 112 to 118 (112 to 118) interacts with ATP; the sequence is GTHGKTT.

The protein belongs to the MurCDEF family.

The protein localises to the cytoplasm. It catalyses the reaction UDP-N-acetyl-alpha-D-muramate + L-alanine + ATP = UDP-N-acetyl-alpha-D-muramoyl-L-alanine + ADP + phosphate + H(+). The protein operates within cell wall biogenesis; peptidoglycan biosynthesis. Functionally, cell wall formation. This is UDP-N-acetylmuramate--L-alanine ligase from Burkholderia lata (strain ATCC 17760 / DSM 23089 / LMG 22485 / NCIMB 9086 / R18194 / 383).